A 150-amino-acid chain; its full sequence is UPF0540 protein At1g62080 (150 aa).

A signal peptide spans 1-21; it reads MNATKFLVLLVIGVLCAIVTA. Residues 119–135 show a composition bias toward low complexity; it reads AAAARAKGKVASASRVK. Residues 119–150 form a disordered region; the sequence is AAAARAKGKVASASRVKGSSEKKKKDRKGKKD.

This sequence belongs to the UPF0540 family.

In Arabidopsis thaliana (Mouse-ear cress), this protein is UPF0540 protein At1g62080.